Reading from the N-terminus, the 233-residue chain is Octanoyltransferase (233 aa).

One can recognise a BPL/LPL catalytic domain in the interval 38 to 218; sequence AGGPDTLLLL…AVCDALDGVL (181 aa). Over residues 57 to 66 the composition is skewed to basic and acidic residues; it reads RRTEPHERPL. The segment at 57 to 77 is disordered; the sequence is RRTEPHERPLDGTPVVDTDRG. Substrate is bound by residues 76–83, 148–150, and 161–163; these read RGGKITWH, AIG, and GFA. Catalysis depends on cysteine 179, which acts as the Acyl-thioester intermediate.

It belongs to the LipB family.

It localises to the cytoplasm. The enzyme catalyses octanoyl-[ACP] + L-lysyl-[protein] = N(6)-octanoyl-L-lysyl-[protein] + holo-[ACP] + H(+). Its pathway is protein modification; protein lipoylation via endogenous pathway; protein N(6)-(lipoyl)lysine from octanoyl-[acyl-carrier-protein]: step 1/2. Functionally, catalyzes the transfer of endogenously produced octanoic acid from octanoyl-acyl-carrier-protein onto the lipoyl domains of lipoate-dependent enzymes. Lipoyl-ACP can also act as a substrate although octanoyl-ACP is likely to be the physiological substrate. The sequence is that of Octanoyltransferase from Mycolicibacterium paratuberculosis (strain ATCC BAA-968 / K-10) (Mycobacterium paratuberculosis).